Consider the following 328-residue polypeptide: RNA-binding motif protein, X-linked 2 (328 aa).

Residue K8 forms a Glycyl lysine isopeptide (Lys-Gly) (interchain with G-Cter in SUMO2) linkage. The RRM domain maps to 36-114 (AWIFLGGLPY…RTIRVDHVAN (79 aa)). The segment at 118 to 328 (PQESEDVDDV…SFHASDRRHY (211 aa)) is disordered. A Phosphothreonine modification is found at T140. A Phosphoserine modification is found at S149. The span at 157 to 172 (TKKPKKDKKEKKKKKE) shows a compositional bias: basic residues. 3 stretches are compositionally biased toward basic and acidic residues: residues 192–219 (TVKE…ECRE), 236–247 (GRAEEPEWEAKK), and 255–273 (KPSS…DRGR). A Glycyl lysine isopeptide (Lys-Gly) (interchain with G-Cter in SUMO2) cross-link involves residue K246. The residue at position 274 (S274) is a Phosphoserine. Positions 291-314 (HRSRSRSRSRSPDRSHRHKKHRYS) are enriched in basic residues. Positions 315–328 (HERESFHASDRRHY) are enriched in basic and acidic residues.

Belongs to the IST3 family. In terms of assembly, part of the activated spliceosome B/catalytic step 1 spliceosome, one of the forms of the spliceosome which has a well-formed active site but still cannot catalyze the branching reaction and is composed of at least 52 proteins, the U2, U5 and U6 snRNAs and the pre-mRNA. Component of the minor spliceosome, which splices U12-type introns.

The protein localises to the nucleus. Functionally, involved in pre-mRNA splicing as component of the activated spliceosome. As a component of the minor spliceosome, involved in the splicing of U12-type introns in pre-mRNAs. This is RNA-binding motif protein, X-linked 2 (Rbmx2) from Rattus norvegicus (Rat).